A 288-amino-acid chain; its full sequence is Homoserine kinase (288 aa).

ATP is bound at residue 79-89 (PLARGLGSSSS).

The protein belongs to the GHMP kinase family. Homoserine kinase subfamily.

It is found in the cytoplasm. The enzyme catalyses L-homoserine + ATP = O-phospho-L-homoserine + ADP + H(+). Its pathway is amino-acid biosynthesis; L-threonine biosynthesis; L-threonine from L-aspartate: step 4/5. In terms of biological role, catalyzes the ATP-dependent phosphorylation of L-homoserine to L-homoserine phosphate. This chain is Homoserine kinase, found in Streptococcus sanguinis (strain SK36).